The primary structure comprises 398 residues: Cyclic GMP-AMP synthase-like receptor (398 aa).

ATP is bound by residues Ser-57 and 69-71; that span reads EFD. Mg(2+)-binding residues include Glu-69, Asp-71, and Asp-192. GTP contacts are provided by residues Asp-192 and 240–247; that span reads SLSFQEQE. ATP contacts are provided by residues 244 to 247, Lys-265, and 277 to 281; these read QEQE and SYYIK. The Mn(2+) site is built by Ile-288, Glu-289, and Asp-292.

This sequence belongs to the mab-21 family. Mg(2+) serves as cofactor. Requires Mn(2+) as cofactor.

It catalyses the reaction GTP + ATP = 2',3'-cGAMP + 2 diphosphate. The catalysed reaction is GTP + ATP = pppGp(2'-5')A + diphosphate. It carries out the reaction pppGp(2'-5')A = 2',3'-cGAMP + diphosphate. With respect to regulation, the enzyme activity is specifically activated by double-stranded RNA (dsRNA). Functionally, nucleotidyltransferase that catalyzes the formation of cyclic GMP-AMP (2',3'-cGAMP) from ATP and GTP and plays a key role in innate immunity. Acts as a key sensor of double-stranded RNA (dsRNA), the presence of dsRNA in the cytoplasm being a danger signal that triggers the immune responses. Directly binds dsRNA, activating the nucleotidyltransferase activity, leading to synthesis of 2',3'-cGAMP, a second messenger that binds to and activates Sting, thereby triggering the antiviral immune response via activation of the NF-kappa-B transcription factor Rel (Relish). This is Cyclic GMP-AMP synthase-like receptor from Tribolium castaneum (Red flour beetle).